We begin with the raw amino-acid sequence, 507 residues long: RNA demethylase ALKBH9B (507 aa).

2 disordered regions span residues 76–102 and 145–183; these read GSER…DNHS and QEDE…LSRD. Over residues 89 to 100 the composition is skewed to basic and acidic residues; sequence DEKSENGEDCDN. Over residues 145–160 the composition is skewed to acidic residues; that stretch reads QEDEFDEEEEEEEEER. Positions 174–183 are enriched in basic and acidic residues; the sequence is TPEKPKLSRD. The region spanning 317-414 is the Fe2OG dioxygenase domain; the sequence is VPDSCIVNIY…RISITFRKMD (98 aa). The Fe cation site is built by His335, Asp337, and His396. Arg405 is a binding site for 2-oxoglutarate. The disordered stretch occupies residues 432-507; sequence EPLPLDLNRS…MPRPSRRNYG (76 aa). Polar residues predominate over residues 440–450; the sequence is RSGSTSRFSRL. A compositionally biased stretch (basic residues) spans 497 to 507; it reads GMPRPSRRNYG.

The protein belongs to the alkB family. In terms of assembly, (Microbial infection) Interacts with the capsid protein ORF3b of the alfalfa mosaic virus (AMV). It depends on Fe(2+) as a cofactor.

The protein localises to the cytoplasm. The protein resides in the P-body. It is found in the cytoplasmic granule. The catalysed reaction is an N(6)-methyladenosine in mRNA + 2-oxoglutarate + O2 = an adenosine in mRNA + formaldehyde + succinate + CO2. In terms of biological role, dioxygenase that demethylates RNA by oxidative demethylation: specifically demethylates N(6)-methyladenosine (m6A) RNA, the most prevalent internal modification of messenger RNA (mRNA) in higher eukaryotes. Modulates viral infection of the alfalfa mosaic virus (AMV) and the m6A abundance in its genomic RNAs. This chain is RNA demethylase ALKBH9B, found in Arabidopsis thaliana (Mouse-ear cress).